A 475-amino-acid chain; its full sequence is DNA-binding protein D-ETS-6 (475 aa).

The segment at 42-150 is disordered; that stretch reads SIGSGNETKL…VSPVEVPVDP (109 aa). Positions 70-108 are enriched in low complexity; sequence SSSSTSDSSASSYSSTDSDSGSSTSSSSIRSQLPALNLP. The span at 109–121 shows a compositional bias: pro residues; sequence VPLPLATPTPPAV. Positions 122–144 are enriched in low complexity; it reads SSPHQAPSPRRNSSDSNRSVSPV. Positions 132-219 constitute a PNT domain; that stretch reads RNSSDSNRSV…QHFAISLYHA (88 aa). Positions 255-335 form a DNA-binding region, ETS; that stretch reads IQLWQFLLEL…HGKRYAYKFD (81 aa). The tract at residues 350-475 is disordered; it reads GDPASSMLGS…PVTPTTNAFN (126 aa). A compositionally biased stretch (basic residues) spans 375–388; that stretch reads PPLHHHPQHSHPHH. The segment covering 401–436 has biased composition (low complexity); sequence SSPASNSSSLGFPSSSTASSQASPGQAPASSSASTS. Polar residues predominate over residues 453-475; it reads RTSTSSAGNYDQGPVTPTTNAFN.

This sequence belongs to the ETS family. As to expression, embryonic ventral nervous system and 1 pair of neurons in each thoracic segment.

The protein localises to the nucleus. This is DNA-binding protein D-ETS-6 (Ets21C) from Drosophila melanogaster (Fruit fly).